We begin with the raw amino-acid sequence, 393 residues long: Uroporphyrinogen decarboxylase, chloroplastic (393 aa).

The interval 1–64 (MATACPPLSL…AGERNQREEV (64 aa)) is disordered. Residues 23-37 (AGPNAGSSRPSAAAP) show a composition bias toward low complexity. Basic and acidic residues predominate over residues 38–50 (SERRSWRRPRPDG). Residues 73–77 (RQAGR), F92, S122, D123, Y200, S255, and H370 each bind substrate.

Belongs to the uroporphyrinogen decarboxylase family. Homodimer.

Its subcellular location is the plastid. It is found in the chloroplast. The enzyme catalyses uroporphyrinogen III + 4 H(+) = coproporphyrinogen III + 4 CO2. It functions in the pathway porphyrin-containing compound metabolism; protoporphyrin-IX biosynthesis; coproporphyrinogen-III from 5-aminolevulinate: step 4/4. Catalyzes the decarboxylation of four acetate groups of uroporphyrinogen-III to yield coproporphyrinogen-III. The sequence is that of Uroporphyrinogen decarboxylase, chloroplastic (LES22) from Zea mays (Maize).